Reading from the N-terminus, the 146-residue chain is Angiogenin (146 aa).

The signal sequence occupies residues 1–24 (MVMGLGLFLLVFMLGLGLTLPTLA). The residue at position 25 (glutamine 25) is a Pyrrolidone carboxylic acid. The active-site Proton acceptor is histidine 37. Arginine 45 contributes to the tRNA binding site. 3 disulfide bridges follow: cysteine 50–cysteine 105, cysteine 63–cysteine 116, and cysteine 81–cysteine 131. Residues 55–59 (RRRHL) carry the Nucleolar localization signal motif. TRNA contacts are provided by cysteine 105 and isoleucine 127. The active-site Proton donor is histidine 138.

Belongs to the pancreatic ribonuclease family. As to quaternary structure, homodimer. Interacts with RNH1; inhibiting ANG ribonuclease activity. Interacts with PCNA.

It is found in the secreted. Its subcellular location is the nucleus. The protein resides in the nucleolus. It localises to the cytoplasm. The protein localises to the stress granule. With respect to regulation, has weak tRNA ribonuclease activity by itself due to partial autoinhibition by its C-terminus, which folds into a short alpha-helix that partially occludes the substrate-binding site. In absence of stress, the ribonuclease activity is inhibited by RNH1 in the cytoplasm. In response to stress, dissociates from RNH1 in the cytoplasm and associates with cytoplasmic ribosomes with vacant A-sites: ribosomes directly activate the tRNA ribonuclease activity of ANG by refolding the C-terminal alpha-helix. In response to stress, the angiogenic activity of ANG is inhibited by RNH1 in the nucleus. Its function is as follows. Secreted ribonuclease that can either promote or restrict cell proliferation of target cells, depending on the context. Endocytosed in target cells via its receptor PLXNB2 and translocates to the cytoplasm or nucleus. Under stress conditions, localizes to the cytoplasm and promotes the assembly of stress granules (SGs): specifically cleaves a subset of tRNAs within anticodon loops to produce tRNA-derived stress-induced fragments (tiRNAs), resulting in translation repression and inhibition of cell proliferation. tiRNas also prevent formation of apoptosome, thereby promoting cell survival. Preferentially cleaves RNAs between a pyrimidine and an adenosine residue, suggesting that it cleaves the anticodon loop of tRNA(Ala) (32-UUAGCAU-38) after positions 33 and 36. Cleaves a subset of tRNAs, including tRNA(Ala), tRNA(Glu), tRNA(Gly), tRNA(Lys), tRNA(Val), tRNA(His), tRNA(Asp) and tRNA(Sec). Under growth conditions and in differentiated cells, translocates to the nucleus and stimulates ribosomal RNA (rRNA) transcription, including that containing the initiation site sequences of 45S rRNA, thereby promoting cell growth and proliferation. Angiogenin induces vascularization of normal and malignant tissues via its ability to promote rRNA transcription. Involved in hematopoietic stem and progenitor cell (HSPC) growth and survival by promoting rRNA transcription in growth conditions and inhibiting translation in response to stress, respectively. Mediates the crosstalk between myeloid and intestinal epithelial cells to protect the intestinal epithelial barrier integrity: secreted by myeloid cells and promotes intestinal epithelial cells proliferation and survival. Also mediates osteoclast-endothelial cell crosstalk in growing bone: produced by osteoclasts and protects the neighboring vascular cells against senescence by promoting rRNA transcription. This Papio hamadryas (Hamadryas baboon) protein is Angiogenin (ANG).